We begin with the raw amino-acid sequence, 259 residues long: Pyrroloquinoline-quinone synthase (259 aa).

This sequence belongs to the PqqC family.

The catalysed reaction is 6-(2-amino-2-carboxyethyl)-7,8-dioxo-1,2,3,4,7,8-hexahydroquinoline-2,4-dicarboxylate + 3 O2 = pyrroloquinoline quinone + 2 H2O2 + 2 H2O + H(+). The protein operates within cofactor biosynthesis; pyrroloquinoline quinone biosynthesis. Ring cyclization and eight-electron oxidation of 3a-(2-amino-2-carboxyethyl)-4,5-dioxo-4,5,6,7,8,9-hexahydroquinoline-7,9-dicarboxylic-acid to PQQ. The protein is Pyrroloquinoline-quinone synthase of Bradyrhizobium sp. (strain ORS 278).